Consider the following 460-residue polypeptide: NADH-ubiquinone oxidoreductase chain 4 (460 aa).

The next 13 membrane-spanning stretches (helical) occupy residues 20–42 (AKWLWTTSIAQSLVIALASLSWL), 61–81 (PLSTPLLVLTCWLLPLMVLAS), 94–113 (RTYISLLVSLQMFLILAFGA), 117–139 (IMFYIMFEATLLPTLIIITRWGN), 148–168 (TYFLFYTLAGSLPLLVALLLL), 195–215 (LWWAACLLAFLVKMPVYGVHL), 225–245 (PIAGSMILAAVLLKLGGYGMM), 258–278 (LAYPFIVLALWGIIMTGSICL), 285–304 (SLIAYSSVGHMGLVAGGILI), 308–330 (WGFTGAIILMIAHGLASSALFCL), 351–371 (MILPLMTTWWFVASLANLALP), 394–414 (LLLTGLGTLITASYSLYLFLM), and 436–456 (LLITLHLIPIILLILKPELMW).

The protein belongs to the complex I subunit 4 family.

The protein resides in the mitochondrion membrane. It catalyses the reaction a ubiquinone + NADH + 5 H(+)(in) = a ubiquinol + NAD(+) + 4 H(+)(out). Functionally, core subunit of the mitochondrial membrane respiratory chain NADH dehydrogenase (Complex I) that is believed to belong to the minimal assembly required for catalysis. Complex I functions in the transfer of electrons from NADH to the respiratory chain. The immediate electron acceptor for the enzyme is believed to be ubiquinone. This chain is NADH-ubiquinone oxidoreductase chain 4 (MT-ND4), found in Salmo salar (Atlantic salmon).